A 483-amino-acid polypeptide reads, in one-letter code: Aspartyl/glutamyl-tRNA(Asn/Gln) amidotransferase subunit B (483 aa).

Belongs to the GatB/GatE family. GatB subfamily. Heterotrimer of A, B and C subunits.

It catalyses the reaction L-glutamyl-tRNA(Gln) + L-glutamine + ATP + H2O = L-glutaminyl-tRNA(Gln) + L-glutamate + ADP + phosphate + H(+). The enzyme catalyses L-aspartyl-tRNA(Asn) + L-glutamine + ATP + H2O = L-asparaginyl-tRNA(Asn) + L-glutamate + ADP + phosphate + 2 H(+). Functionally, allows the formation of correctly charged Asn-tRNA(Asn) or Gln-tRNA(Gln) through the transamidation of misacylated Asp-tRNA(Asn) or Glu-tRNA(Gln) in organisms which lack either or both of asparaginyl-tRNA or glutaminyl-tRNA synthetases. The reaction takes place in the presence of glutamine and ATP through an activated phospho-Asp-tRNA(Asn) or phospho-Glu-tRNA(Gln). The chain is Aspartyl/glutamyl-tRNA(Asn/Gln) amidotransferase subunit B from Rickettsia bellii (strain RML369-C).